The sequence spans 117 residues: Large ribosomal subunit protein bL20c (117 aa).

Belongs to the bacterial ribosomal protein bL20 family.

The protein resides in the plastid. The protein localises to the chloroplast. In terms of biological role, binds directly to 23S ribosomal RNA and is necessary for the in vitro assembly process of the 50S ribosomal subunit. It is not involved in the protein synthesizing functions of that subunit. The sequence is that of Large ribosomal subunit protein bL20c from Ceratophyllum demersum (Rigid hornwort).